The primary structure comprises 101 residues: Small ribosomal subunit protein uS14 (101 aa).

Belongs to the universal ribosomal protein uS14 family. As to quaternary structure, part of the 30S ribosomal subunit. Contacts proteins S3 and S10.

Its function is as follows. Binds 16S rRNA, required for the assembly of 30S particles and may also be responsible for determining the conformation of the 16S rRNA at the A site. The chain is Small ribosomal subunit protein uS14 from Aliivibrio fischeri (strain ATCC 700601 / ES114) (Vibrio fischeri).